The following is a 462-amino-acid chain: MAEQLYLENIDEFVTDQNKIVTYKWLSYTLGVHVNQAKQMLYEYVERKRKENSGAQLHVTYLVSGSLIQNGHSCHKVAVVREDKLEAVKSKLAVTASIHVYSIQKAMLKDSGPLFNTDYDILKSNLQNCSKFSAIQCAAAVPRAPAESPSSRKYEQSNLQAASEAQASELTTNGHGPPASKQASQQPKGIMGMLISKAATKTQDTNKETKPEAREVTSASSAGGKAPGKGSVMSNFFGKAAMNKLKVNLDSEQAVKEEKTVEQPPVSVTEPKLAAPPAQKKSSRKSEPGKVQQKEKSSRGKRVDLSDEEAKETEHLKKKRRRIKLPQSDSSEDEVFEDSPEMYEADSPSPPPVSPPPDPMPKTEPPPVKRSSGETKRRRKRVLKSKTFVDEEGCIVTEKVYESESCTDSEEELKMKPASAHKPPAAAVKREPREERKGPKKGAAALGKANRQVSITGFFQKK.

An N-acetylalanine modification is found at Ala-2. Disordered regions lie at residues 144–186 (APAE…ASQQ), 200–230 (TKTQDTNKETKPEAREVTSASSAGGKAPGKG), 254–384 (AVKE…RVLK), and 403–462 (SESC…FQKK). Polar residues predominate over residues 156–174 (QSNLQAASEAQASELTTNG). A compositionally biased stretch (basic and acidic residues) spans 204–215 (DTNKETKPEARE). Low complexity predominate over residues 218 to 230 (SASSAGGKAPGKG). Lys-256 is covalently cross-linked (Glycyl lysine isopeptide (Lys-Gly) (interchain with G-Cter in SUMO); alternate). A Glycyl lysine isopeptide (Lys-Gly) (interchain with G-Cter in SUMO2); alternate cross-link involves residue Lys-256. Lys-259 is covalently cross-linked (Glycyl lysine isopeptide (Lys-Gly) (interchain with G-Cter in SUMO2)). Positions 284–305 (RKSEPGKVQQKEKSSRGKRVDL) are enriched in basic and acidic residues. Residue Ser-306 is modified to Phosphoserine. Positions 330 to 344 (SSEDEVFEDSPEMYE) are enriched in acidic residues. Residues 348-368 (PSPPPVSPPPDPMPKTEPPPV) are compositionally biased toward pro residues. Residues Ser-403 and Ser-405 each carry the phosphoserine modification. Thr-407 carries the post-translational modification Phosphothreonine. Position 409 is a phosphoserine (Ser-409). The segment covering 416–427 (KPASAHKPPAAA) has biased composition (low complexity). Residues 428 to 437 (VKREPREERK) are compositionally biased toward basic and acidic residues. A Glycyl lysine isopeptide (Lys-Gly) (interchain with G-Cter in SUMO); alternate cross-link involves residue Lys-429. Residue Lys-429 forms a Glycyl lysine isopeptide (Lys-Gly) (interchain with G-Cter in SUMO2); alternate linkage. Residues 451 to 462 (RQVSITGFFQKK) are compositionally biased toward polar residues. Residues 452-459 (QVSITGFF) carry the PIP-box motif. Residue Ser-454 is modified to Phosphoserine.

In terms of assembly, component of both the DNA polymerase delta and DNA polymerase zeta complexes. The tetrameric DNA polymerase delta complex (Pol-delta4), which consists of POLD1/p125, POLD2/p50, POLD3/p66/p68 and POLD4/p12, with POLD1 bearing DNA polymerase and 3' to 5' proofreading exonuclease activities. Within this complex, directly interacts with POLD2. Following stress caused by DNA damaging agents or by replication stress, POLD4 is degraded and Pol-delta4 is converted into a trimeric form of the complex (Pol-delta3), which consists of POLD1, POLD2 and POLD3. Pol-delta3 is the major form occurring at S phase replication sites, as well as DNA damage sites. Directly interacts with PCNA, as do POLD1 and POLD4; this interaction stimulates Pol-delta polymerase activity. POLD3 phosphorylation at Ser-454 impairs PCNA binding. Component of the DNA polymerase zeta complex (POLZ), which consists of REV3L, MAD2L2, POLD2 and POLD3, with REV3L bearing DNA polymerase catalytic activity. The DNA polymerase delta complex interacts with POLDIP2; this interaction is probably mediated through direct binding to POLD2. In terms of processing, ubiquitinated, but not targeted to the proteasome. Sumoylated. Sumoylation by SUMO3 may be predominant. Phosphorylation at Ser-454 is thought to decrease the affinity for PCNA and Pol-delta4 processivity. May be phosphorylated by CDK1-cyclin-A complex, as well as CDK2-cyclin-A and CDK2-cyclin-E complexes. PCNA interferes with CDK-cyclin phosphorylation.

It is found in the cytoplasm. It localises to the nucleus. Its function is as follows. Accessory component of both the DNA polymerase delta complex and the DNA polymerase zeta complex. As a component of the trimeric and tetrameric DNA polymerase delta complexes (Pol-delta3 and Pol-delta4, respectively), plays a role in high fidelity genome replication, including in lagging strand synthesis, and repair. Required for optimal Pol-delta activity. Stabilizes the Pol-delta complex and plays a major role in Pol-delta stimulation by PCNA. Pol-delta3 and Pol-delta4 are characterized by the absence or the presence of POLD4. They exhibit differences in catalytic activity. Most notably, Pol-delta3 shows higher proofreading activity than Pol-delta4. Although both Pol-delta3 and Pol-delta4 process Okazaki fragments in vitro, Pol-delta3 may also be better suited to fulfill this task, exhibiting near-absence of strand displacement activity compared to Pol-delta4 and stalling on encounter with the 5'-blocking oligonucleotides. Pol-delta3 idling process may avoid the formation of a gap, while maintaining a nick that can be readily ligated. Along with DNA polymerase kappa, DNA polymerase delta carries out approximately half of nucleotide excision repair (NER) synthesis following UV irradiation. In this context, POLD3, along with PCNA and RFC1-replication factor C complex, is required to recruit POLD1, the catalytic subunit of the polymerase delta complex, to DNA damage sites. Under conditions of DNA replication stress, required for the repair of broken replication forks through break-induced replication (BIR). Involved in the translesion synthesis (TLS) of templates carrying O6-methylguanine or abasic sites performed by Pol-delta4, independently of DNA polymerase zeta (REV3L) or eta (POLH). Facilitates abasic site bypass by DNA polymerase delta by promoting extension from the nucleotide inserted opposite the lesion. Also involved in TLS, as a component of the tetrameric DNA polymerase zeta complex. Along with POLD2, dramatically increases the efficiency and processivity of DNA synthesis of the DNA polymerase zeta complex compared to the minimal zeta complex, consisting of only REV3L and REV7. In Mus musculus (Mouse), this protein is DNA polymerase delta subunit 3 (Pold3).